Consider the following 272-residue polypeptide: Probable glutathione S-transferase DHAR2, chloroplastic (272 aa).

The N-terminal 57 residues, 1–57 (MAVLLRTTTSATTATSGGSSSATALLATTFRRGGRRLLLLPATRGSAPRRAALLTAR), are a transit peptide targeting the chloroplast. Lys-68 and Asp-79 together coordinate glutathione. L-ascorbate is bound by residues Lys-68 and Asp-79. The GST N-terminal domain maps to 70-148 (SLTVPDRLGD…AIEEKYPEPS (79 aa)). The active-site Nucleophile is Cys-80. Residues Lys-107, Val-120, Ser-133, His-219, and Trp-266 each contribute to the glutathione site. The GST C-terminal domain maps to 126 to 272 (EEQWVADSDV…IAGWRPKVMG (147 aa)). Lys-269 contributes to the L-ascorbate binding site.

The protein belongs to the GST superfamily. DHAR family. In terms of assembly, monomer.

The protein resides in the plastid. It is found in the chloroplast. It carries out the reaction RX + glutathione = an S-substituted glutathione + a halide anion + H(+). The enzyme catalyses L-dehydroascorbate + 2 glutathione = glutathione disulfide + L-ascorbate. Involved in ascorbate homeostasis. Maintains redox pools of ascorbate by recycling dihydroascorbate (DHA) to ascorbate. Involved in scavenging reactive oxygen species (ROS) under oxidative stresses. The sequence is that of Probable glutathione S-transferase DHAR2, chloroplastic from Oryza sativa subsp. japonica (Rice).